Reading from the N-terminus, the 220-residue chain is Ribose-5-phosphate isomerase A (220 aa).

Residues 25-28, 80-83, and 93-96 each bind substrate; these read TGST, DGAD, and KGGG. E102 acts as the Proton acceptor in catalysis. K120 lines the substrate pocket.

The protein belongs to the ribose 5-phosphate isomerase family. As to quaternary structure, homodimer.

It catalyses the reaction aldehydo-D-ribose 5-phosphate = D-ribulose 5-phosphate. It functions in the pathway carbohydrate degradation; pentose phosphate pathway; D-ribose 5-phosphate from D-ribulose 5-phosphate (non-oxidative stage): step 1/1. Its function is as follows. Catalyzes the reversible conversion of ribose-5-phosphate to ribulose 5-phosphate. The sequence is that of Ribose-5-phosphate isomerase A from Bacillus cereus (strain ATCC 10987 / NRS 248).